Here is an 87-residue protein sequence, read N- to C-terminus: Small ribosomal subunit protein bS20 (87 aa).

The protein belongs to the bacterial ribosomal protein bS20 family.

Binds directly to 16S ribosomal RNA. The chain is Small ribosomal subunit protein bS20 from Sphingopyxis alaskensis (strain DSM 13593 / LMG 18877 / RB2256) (Sphingomonas alaskensis).